We begin with the raw amino-acid sequence, 366 residues long: Cobalt-precorrin-5B C(1)-methyltransferase (366 aa).

It belongs to the CbiD family.

It catalyses the reaction Co-precorrin-5B + S-adenosyl-L-methionine = Co-precorrin-6A + S-adenosyl-L-homocysteine. It participates in cofactor biosynthesis; adenosylcobalamin biosynthesis; cob(II)yrinate a,c-diamide from sirohydrochlorin (anaerobic route): step 6/10. In terms of biological role, catalyzes the methylation of C-1 in cobalt-precorrin-5B to form cobalt-precorrin-6A. This chain is Cobalt-precorrin-5B C(1)-methyltransferase, found in Pseudomonas aeruginosa (strain LESB58).